The sequence spans 249 residues: Flagellar L-ring protein (249 aa).

The signal sequence occupies residues 1–25; it reads MSRLRTSHALRTAAALVAVGCLASG. Cys26 is lipidated: N-palmitoyl cysteine. The S-diacylglycerol cysteine moiety is linked to residue Cys26.

It belongs to the FlgH family. The basal body constitutes a major portion of the flagellar organelle and consists of four rings (L,P,S, and M) mounted on a central rod.

It localises to the cell outer membrane. The protein resides in the bacterial flagellum basal body. Assembles around the rod to form the L-ring and probably protects the motor/basal body from shearing forces during rotation. This Afipia carboxidovorans (strain ATCC 49405 / DSM 1227 / KCTC 32145 / OM5) (Oligotropha carboxidovorans) protein is Flagellar L-ring protein.